A 436-amino-acid chain; its full sequence is tRNA-2-methylthio-N(6)-dimethylallyladenosine synthase (436 aa).

The MTTase N-terminal domain occupies 5–120 (KKLFIQTLGC…IKDVVDVKGA (116 aa)). [4Fe-4S] cluster is bound by residues C14, C51, C83, C152, C156, and C159. Positions 138–372 (KTNKYRASVN…IELHKRYLEE (235 aa)) constitute a Radical SAM core domain. The TRAM domain occupies 375-436 (PKLIGETLNI…RTSLKGEVVN (62 aa)).

This sequence belongs to the methylthiotransferase family. MiaB subfamily. Monomer. The cofactor is [4Fe-4S] cluster.

The protein localises to the cytoplasm. The enzyme catalyses N(6)-dimethylallyladenosine(37) in tRNA + (sulfur carrier)-SH + AH2 + 2 S-adenosyl-L-methionine = 2-methylsulfanyl-N(6)-dimethylallyladenosine(37) in tRNA + (sulfur carrier)-H + 5'-deoxyadenosine + L-methionine + A + S-adenosyl-L-homocysteine + 2 H(+). Its function is as follows. Catalyzes the methylthiolation of N6-(dimethylallyl)adenosine (i(6)A), leading to the formation of 2-methylthio-N6-(dimethylallyl)adenosine (ms(2)i(6)A) at position 37 in tRNAs that read codons beginning with uridine. This is tRNA-2-methylthio-N(6)-dimethylallyladenosine synthase from Aliarcobacter butzleri (strain RM4018) (Arcobacter butzleri).